The following is a 222-amino-acid chain: Probable transaldolase (222 aa).

K91 (schiff-base intermediate with substrate) is an active-site residue.

Belongs to the transaldolase family. Type 3B subfamily.

The protein localises to the cytoplasm. It carries out the reaction D-sedoheptulose 7-phosphate + D-glyceraldehyde 3-phosphate = D-erythrose 4-phosphate + beta-D-fructose 6-phosphate. Its pathway is carbohydrate degradation; pentose phosphate pathway; D-glyceraldehyde 3-phosphate and beta-D-fructose 6-phosphate from D-ribose 5-phosphate and D-xylulose 5-phosphate (non-oxidative stage): step 2/3. Transaldolase is important for the balance of metabolites in the pentose-phosphate pathway. In Chlorobaculum tepidum (strain ATCC 49652 / DSM 12025 / NBRC 103806 / TLS) (Chlorobium tepidum), this protein is Probable transaldolase.